The chain runs to 63 residues: Large ribosomal subunit protein uL29 (63 aa).

Belongs to the universal ribosomal protein uL29 family.

The chain is Large ribosomal subunit protein uL29 from Pectobacterium atrosepticum (strain SCRI 1043 / ATCC BAA-672) (Erwinia carotovora subsp. atroseptica).